The primary structure comprises 521 residues: Exodeoxyribonuclease 7 large subunit (521 aa).

The segment at 494–521 (ATSGAARPKPAAKPSTKAKEPGNQGSLF) is disordered. The span at 498–508 (AARPKPAAKPS) shows a compositional bias: low complexity.

The protein belongs to the XseA family. Heterooligomer composed of large and small subunits.

It is found in the cytoplasm. The catalysed reaction is Exonucleolytic cleavage in either 5'- to 3'- or 3'- to 5'-direction to yield nucleoside 5'-phosphates.. Bidirectionally degrades single-stranded DNA into large acid-insoluble oligonucleotides, which are then degraded further into small acid-soluble oligonucleotides. The chain is Exodeoxyribonuclease 7 large subunit from Mesorhizobium japonicum (strain LMG 29417 / CECT 9101 / MAFF 303099) (Mesorhizobium loti (strain MAFF 303099)).